The chain runs to 1306 residues: Angiotensin-converting enzyme (1306 aa).

The signal sequence occupies residues 1-28 (MGAASGRRSPPLLLPLLLLLLPPPPVIL). At 29-1256 (ELDPALQPGN…GLNLEEQQAR (1228 aa)) the chain is on the extracellular side. Peptidase M2 domains are found at residues 40 to 624 (PADE…LGWP) and 643 to 1222 (VSDE…LGWP). N-linked (GlcNAc...) asparagine glycosylation is found at Asn-54, Asn-74, Asn-111, Asn-146, and Asn-160. A disulfide bond links Cys-157 and Cys-165. Residue Tyr-231 coordinates chloride. N-linked (GlcNAc...) asparagine glycosylation is present at Asn-318. Cysteines 359 and 377 form a disulfide. His-390 is a Zn(2+) binding site. Glu-391 (proton acceptor 1) is an active-site residue. Zn(2+)-binding residues include His-394 and Glu-418. Asn-445 and Asn-509 each carry an N-linked (GlcNAc...) asparagine glycan. The Proton donor 1 role is filled by His-520. A glycan (N-linked (GlcNAc...) asparagine) is linked at Asn-523. Arg-529 is a chloride binding site. A disulfide bridge connects residues Cys-545 and Cys-557. N-linked (GlcNAc...) asparagine glycans are attached at residues Asn-673, Asn-695, Asn-714, and Asn-760. The cysteines at positions 757 and 763 are disulfide-linked. Arg-791 and Tyr-829 together coordinate chloride. Residue Asn-942 is glycosylated (N-linked (GlcNAc...) asparagine). The cysteines at positions 957 and 975 are disulfide-linked. Residue His-988 coordinates Zn(2+). Residue Glu-989 is the Proton acceptor 2 of the active site. His-992 and Glu-1016 together coordinate Zn(2+). Residues Trp-1090 and Arg-1094 each contribute to the chloride site. His-1118 serves as the catalytic Proton donor 2. A chloride-binding site is contributed by Arg-1127. A disulfide bridge connects residues Cys-1143 and Cys-1155. Asn-1191 and Asn-1225 each carry an N-linked (GlcNAc...) asparagine glycan. Positions 1215-1256 (HGEKLGWPQYNWTPNSARLEGPFVGSGRVNFLGLNLEEQQAR) are juxtamembrane stalk. Residues 1257–1277 (VGQWVLLFLGVALLVATLGLT) traverse the membrane as a helical segment. Over 1278 to 1306 (QRLFSIRHHSLRRPHRGPQFGSEVELRHS) the chain is Cytoplasmic. Ser-1299 carries the phosphoserine modification.

Belongs to the peptidase M2 family. In terms of assembly, monomer and homodimer; homodimerizes following binding to an inhibitor. Interacts with calmodulin (CALM1, CALM2 or CALM3); interaction takes place in the cytoplasmic region and regulates phosphorylation and proteolytic cleavage. The cofactor is Zn(2+). Requires chloride as cofactor. Produced following proteolytic cleavage by secretase enzymes that cleave the transmembrane form in the juxtamembrane stalk region upstream of the transmembrane region. Cleavage can take place at different sites of the juxtamembrane stalk region. Post-translationally, phosphorylated by CK2 on Ser-1299; which allows membrane retention. Phosphorylated on tyrosine residues on its extracellular part, promoting cleavage by secretase enzymes and formation of the soluble form (Angiotensin-converting enzyme, soluble form).

It localises to the cell membrane. The protein localises to the cytoplasm. The protein resides in the secreted. It catalyses the reaction Release of a C-terminal dipeptide, oligopeptide-|-Xaa-Yaa, when Xaa is not Pro, and Yaa is neither Asp nor Glu. Thus, conversion of angiotensin I to angiotensin II, with increase in vasoconstrictor activity, but no action on angiotensin II.. The catalysed reaction is angiotensin I + H2O = L-histidyl-L-leucine + angiotensin II. The enzyme catalyses bradykinin + H2O = L-Phe-L-Arg + bradykinin(1-7). It carries out the reaction substance P + H2O = substance P(1-9) + L-Leu-L-Met-NH2. It catalyses the reaction substance P + H2O = substance P(1-8) + Gly-L-Leu-L-Met-NH2. The catalysed reaction is substance P + H2O = L-Phe-L-Phe-Gly-L-Leu-L-Met-NH2 + substance P(1-6). The enzyme catalyses neurotensin + H2O = neurotensin(1-11) + L-isoleucyl-L-leucine. It carries out the reaction goralatide + H2O = N-acetyl-L-seryl-L-aspartate + L-lysyl-L-proline. It catalyses the reaction Met-enkephalin + H2O = L-phenylalanyl-L-methionine + L-tyrosylglycylglycine. The catalysed reaction is Leu-enkephalin + H2O = L-tyrosylglycylglycine + L-phenylalanyl-L-leucine. The enzyme catalyses Met-enkephalin-Arg-Phe + H2O = L-arginyl-L-phenylalanine + Met-enkephalin. With respect to regulation, the dipeptidyl carboxypeptidase activity is strongly activated by chloride. The dipeptidyl carboxypeptidase activity is specifically inhibited by lisinopril, captopril and enalaprilat. Dipeptidyl carboxypeptidase that removes dipeptides from the C-terminus of a variety of circulating hormones, such as angiotensin I, bradykinin or enkephalins, thereby playing a key role in the regulation of blood pressure, electrolyte homeostasis or synaptic plasticity. Composed of two similar catalytic domains, each possessing a functional active site, with different selectivity for substrates. Plays a major role in the angiotensin-renin system that regulates blood pressure and sodium retention by the kidney by converting angiotensin I to angiotensin II, resulting in an increase of the vasoconstrictor activity of angiotensin. Also able to inactivate bradykinin, a potent vasodilator, and therefore enhance the blood pressure response. Acts as a regulator of synaptic transmission by mediating cleavage of neuropeptide hormones, such as substance P, neurotensin or enkephalins. Catalyzes degradation of different enkephalin neuropeptides (Met-enkephalin, Leu-enkephalin, Met-enkephalin-Arg-Phe and possibly Met-enkephalin-Arg-Gly-Leu). Acts as a regulator of synaptic plasticity in the nucleus accumbens of the brain by mediating cleavage of Met-enkephalin-Arg-Phe, a strong ligand of Mu-type opioid receptor OPRM1, into Met-enkephalin. Met-enkephalin-Arg-Phe cleavage by ACE decreases activation of OPRM1, leading to long-term synaptic potentiation of glutamate release. Also acts as a regulator of hematopoietic stem cell differentiation by mediating degradation of hemoregulatory peptide N-acetyl-SDKP (AcSDKP). Acts as a regulator of cannabinoid signaling pathway by mediating degradation of hemopressin, an antagonist peptide of the cannabinoid receptor CNR1. Involved in amyloid-beta metabolism by catalyzing degradation of Amyloid-beta protein 40 and Amyloid-beta protein 42 peptides, thereby preventing plaque formation. Catalyzes cleavage of cholecystokinin (maturation of Cholecystokinin-8 and Cholecystokinin-5) and Gonadoliberin-1 (both maturation and degradation) hormones. Degradation of hemoregulatory peptide N-acetyl-SDKP (AcSDKP) and amyloid-beta proteins is mediated by the N-terminal catalytic domain, while angiotensin I and cholecystokinin cleavage is mediated by the C-terminal catalytic region. Functionally, soluble form that is released in blood plasma and other body fluids following proteolytic cleavage in the juxtamembrane stalk region. This Bos taurus (Bovine) protein is Angiotensin-converting enzyme.